Reading from the N-terminus, the 173-residue chain is Thiol-disulfide oxidoreductase ResA (173 aa).

The helical; Signal-anchor for type II membrane protein transmembrane segment at 10-29 threads the bilayer; the sequence is VIILLILSGAVGFTLYQGYF. In terms of domain architecture, Thioredoxin spans 35-173; the sequence is MEIGKEAPNF…LEEYLKKITP (139 aa). C73 and C76 are disulfide-bonded.

It belongs to the thioredoxin family. ResA subfamily.

It localises to the cell membrane. It functions in the pathway protein modification; cytochrome c assembly. In terms of biological role, thiol-disulfide oxidoreductase which is required in disulfide reduction during c-type cytochrome synthesis. May accept reducing equivalents from CcdA, leading to breakage of disulfide bonds in apocytochrome c; following this reduction heme can be covalently attached. In Bacillus cereus (strain ATCC 10987 / NRS 248), this protein is Thiol-disulfide oxidoreductase ResA.